The chain runs to 224 residues: Propanediol dehydratase medium subunit (224 aa).

The segment at 1–18 is targets protein to the BMC; the sequence is MEINEKLLRQIIEDVLSE.

Belongs to the diol/glycerol dehydratase medium subunit family. The propanediol dehydratase enzyme is a heterotrimeric complex composed of a large (PduC), a medium (PduD) and a small (PduE) subunit. It depends on adenosylcob(III)alamin as a cofactor.

The protein resides in the bacterial microcompartment. It carries out the reaction propane-1,2-diol = propanal + H2O. The protein operates within polyol metabolism; 1,2-propanediol degradation. Functionally, part of the PduCDE complex that catalyzes the dehydration of 1,2-propanediol (1,2-PD) to propionaldehyde. This subunit is directly targeted to the bacterial microcompartment (BMC). Its function is as follows. Expression of a cosmid containing the full 21-gene pdu operon in E.coli allows E.coli to grow on 1,2-propanediol (1,2-PD) with the appearance of BMCs in its cytoplasm. In terms of biological role, the 1,2-PD-specific bacterial microcompartment (BMC) concentrates low levels of 1,2-PD catabolic enzymes, concentrates volatile reaction intermediates thus enhancing pathway flux and keeps the level of toxic, mutagenic propionaldehyde low. This Citrobacter freundii protein is Propanediol dehydratase medium subunit.